The chain runs to 447 residues: C4-dicarboxylate transport protein (447 aa).

10 helical membrane-spanning segments follow: residues 21-41 (HLYV…YFAP), 57-77 (LVKM…IAGM), 92-112 (IYFL…VNIV), 141-161 (SLIG…LASG), 163-183 (ILQV…VGEA), 201-221 (LVAI…AYTV), 232-252 (LAML…IVLG), 320-340 (IYMT…LSWG), 345-365 (LLAV…AGFV), and 368-388 (AATL…IFGV).

This sequence belongs to the dicarboxylate/amino acid:cation symporter (DAACS) (TC 2.A.23) family.

It is found in the cell inner membrane. In terms of biological role, responsible for the transport of dicarboxylates such as succinate, fumarate, and malate from the periplasm across the membrane. This is C4-dicarboxylate transport protein from Granulibacter bethesdensis (strain ATCC BAA-1260 / CGDNIH1).